We begin with the raw amino-acid sequence, 106 residues long: Probable insulin-like peptide beta-type 2 (106 aa).

The N-terminal stretch at 1–15 is a signal peptide; the sequence is MNAIIFCLLFTTVTA. Residues 16 to 56 constitute a propeptide that is removed on maturation; that stretch reads TYEVFGKGIEHRNEHLIINQLDIIPVESTPTPNRASRVQKR. Disulfide bonds link Cys-58/Cys-86, Cys-70/Cys-99, Cys-73/Cys-100, and Cys-85/Cys-90.

Belongs to the insulin family.

It localises to the secreted. The chain is Probable insulin-like peptide beta-type 2 (ins-2) from Caenorhabditis elegans.